A 389-amino-acid polypeptide reads, in one-letter code: Homoserine O-acetyltransferase (389 aa).

The segment at 1–21 (MAALRAGKTNNEADQPSSPVL) is disordered. The segment covering 8 to 18 (KTNNEADQPSS) has biased composition (polar residues). The AB hydrolase-1 domain maps to 56 to 366 (NAILVCHALT…DRGHDAFLLD (311 aa)). The Nucleophile role is filled by Ser-161. Arg-231 contacts substrate. Active-site residues include Asp-327 and His-360. Asp-361 is a substrate binding site.

Belongs to the AB hydrolase superfamily. MetX family. In terms of assembly, homodimer.

Its subcellular location is the cytoplasm. It catalyses the reaction L-homoserine + acetyl-CoA = O-acetyl-L-homoserine + CoA. It participates in amino-acid biosynthesis; L-methionine biosynthesis via de novo pathway; O-acetyl-L-homoserine from L-homoserine: step 1/1. Its function is as follows. Transfers an acetyl group from acetyl-CoA to L-homoserine, forming acetyl-L-homoserine. In Mesorhizobium japonicum (strain LMG 29417 / CECT 9101 / MAFF 303099) (Mesorhizobium loti (strain MAFF 303099)), this protein is Homoserine O-acetyltransferase.